A 437-amino-acid chain; its full sequence is Mitochondrial distribution and morphology protein 12 (437 aa).

Residues 1 to 437 enclose the SMP-LTD domain; that stretch reads MSIDINWRTA…VYPSFWTFLI (437 aa). The span at 73–85 shows a compositional bias: acidic residues; that stretch reads DDDADTSDVSEDL. Disordered regions lie at residues 73–101, 187–274, and 354–384; these read DDDA…SELN, SDSG…PPRM, and SEQQ…RQGG. Over residues 91 to 101 the composition is skewed to basic and acidic residues; it reads SQWDRTHSELN. 2 stretches are compositionally biased toward polar residues: residues 215–240 and 371–381; these read DTSN…NNLN and ADSSAHTSQKR.

This sequence belongs to the MDM12 family. Component of the ER-mitochondria encounter structure (ERMES) or MDM complex, composed of mmm1, mdm10, mdm12 and mdm34. A mmm1 homodimer associates with one molecule of mdm12 on each side in a pairwise head-to-tail manner, and the SMP-LTD domains of mmm1 and mdm12 generate a continuous hydrophobic tunnel for phospholipid trafficking.

Its subcellular location is the mitochondrion outer membrane. It is found in the endoplasmic reticulum membrane. Component of the ERMES/MDM complex, which serves as a molecular tether to connect the endoplasmic reticulum (ER) and mitochondria. Components of this complex are involved in the control of mitochondrial shape and protein biogenesis, and function in nonvesicular lipid trafficking between the ER and mitochondria. Mdm12 is required for the interaction of the ER-resident membrane protein mmm1 and the outer mitochondrial membrane-resident beta-barrel protein mdm10. The mdm12-mmm1 subcomplex functions in the major beta-barrel assembly pathway that is responsible for biogenesis of all mitochondrial outer membrane beta-barrel proteins, and acts in a late step after the SAM complex. The mdm10-mdm12-mmm1 subcomplex further acts in the TOM40-specific pathway after the action of the mdm12-mmm1 complex. Essential for establishing and maintaining the structure of mitochondria and maintenance of mtDNA nucleoids. In Aspergillus clavatus (strain ATCC 1007 / CBS 513.65 / DSM 816 / NCTC 3887 / NRRL 1 / QM 1276 / 107), this protein is Mitochondrial distribution and morphology protein 12.